The chain runs to 157 residues: Eukaryotic translation initiation factor 5A-1 (157 aa).

Lysine 52 is subject to Hypusine. Phosphoserine occurs at positions 75 and 77. Threonine 78 bears the Phosphothreonine mark.

Belongs to the eIF-5A family. Post-translationally, lys-52 undergoes hypusination, a unique post-translational modification that consists in the addition of a butylamino group from spermidine to lysine side chain, leading to the formation of the unusual amino acid hypusine. eIF-5As are the only known proteins to undergo this modification, which is essential for their function.

The protein resides in the cytoplasm. Translation factor that promotes translation elongation and termination, particularly upon ribosome stalling at specific amino acid sequence contexts. Binds between the exit (E) and peptidyl (P) site of the ribosome and promotes rescue of stalled ribosome: specifically required for efficient translation of polyproline-containing peptides as well as other motifs that stall the ribosome. Acts as a ribosome quality control (RQC) cofactor by joining the RQC complex to facilitate peptidyl transfer during CAT tailing step. The polypeptide is Eukaryotic translation initiation factor 5A-1 (tif51a) (Schizosaccharomyces pombe (strain 972 / ATCC 24843) (Fission yeast)).